The sequence spans 251 residues: Cell division protein ZapD (251 aa).

It belongs to the ZapD family. In terms of assembly, interacts with FtsZ.

The protein localises to the cytoplasm. Cell division factor that enhances FtsZ-ring assembly. Directly interacts with FtsZ and promotes bundling of FtsZ protofilaments, with a reduction in FtsZ GTPase activity. The polypeptide is Cell division protein ZapD (Paraburkholderia phytofirmans (strain DSM 17436 / LMG 22146 / PsJN) (Burkholderia phytofirmans)).